Here is a 202-residue protein sequence, read N- to C-terminus: Josephin-1 (202 aa).

Ser15 is subject to Phosphoserine. Residues 23-202 (PPQIYHEKQR…EAHQSWRADV (180 aa)) form the Josephin domain. Cys36 (nucleophile) is an active-site residue. Residue His139 is the Proton acceptor of the active site.

In terms of assembly, interacts with beta-actin/ACTB. Monoubiquitinated. Ubiquitination activates deubiquitination activity in vitro.

The protein resides in the cell membrane. Its subcellular location is the cytoplasm. It carries out the reaction Thiol-dependent hydrolysis of ester, thioester, amide, peptide and isopeptide bonds formed by the C-terminal Gly of ubiquitin (a 76-residue protein attached to proteins as an intracellular targeting signal).. Its function is as follows. Deubiquitinates monoubiquitinated probes (in vitro). When ubiquitinated, cleaves 'Lys-63'-linked and 'Lys-48'-linked poly-ubiquitin chains (in vitro), hence may act as a deubiquitinating enzyme. May increase macropinocytosis and suppress clathrin- and caveolae-mediated endocytosis. May enhance membrane dynamics and cell motility independently of its catalytic activity. This chain is Josephin-1 (JOSD1), found in Bos taurus (Bovine).